The chain runs to 365 residues: Aminomethyltransferase (365 aa).

Belongs to the GcvT family. In terms of assembly, the glycine cleavage system is composed of four proteins: P, T, L and H.

The catalysed reaction is N(6)-[(R)-S(8)-aminomethyldihydrolipoyl]-L-lysyl-[protein] + (6S)-5,6,7,8-tetrahydrofolate = N(6)-[(R)-dihydrolipoyl]-L-lysyl-[protein] + (6R)-5,10-methylene-5,6,7,8-tetrahydrofolate + NH4(+). Functionally, the glycine cleavage system catalyzes the degradation of glycine. In Halalkalibacterium halodurans (strain ATCC BAA-125 / DSM 18197 / FERM 7344 / JCM 9153 / C-125) (Bacillus halodurans), this protein is Aminomethyltransferase.